Consider the following 309-residue polypeptide: Ecotin-like protein 3 (309 aa).

The segment at 140–309 (QQELEAPAVS…KSGRDSRRNS (170 aa)) is disordered. Residues 156–167 (VRERQNNPEGHA) show a composition bias toward basic and acidic residues. Residues 168 to 180 (HPVVVHSVESPEV) are compositionally biased toward low complexity. The segment covering 181–190 (SGHKDGDQPM) has biased composition (basic and acidic residues). Residues 196-205 (LKQSCSNSSR) show a composition bias toward low complexity. A compositionally biased stretch (polar residues) spans 209–221 (HSASGSSPKNTPL). Basic and acidic residues predominate over residues 261–279 (SDSTSSRKDDQDSGYEKKV). Residues 290-299 (SSPKRSASPK) are compositionally biased toward low complexity.

Belongs to the protease inhibitor I11 (ecotin) family.

The protein is Ecotin-like protein 3 of Leishmania braziliensis.